The following is a 449-amino-acid chain: mRNA-capping enzyme subunit alpha (449 aa).

Residue Lys-66 is the N6-GMP-lysine intermediate of the active site. The tract at residues Asp-405–Asp-449 is disordered. Over residues His-414–Arg-423 the composition is skewed to polar residues. Residues Gln-424 to Val-442 show a composition bias toward basic and acidic residues.

This sequence belongs to the eukaryotic GTase family. As to quaternary structure, heterodimer. The mRNA-capping enzyme is composed of two separate chains alpha and beta, respectively a mRNA guanylyltransferase and an mRNA 5'-triphosphate monophosphatase.

The protein resides in the nucleus. It catalyses the reaction a 5'-end diphospho-ribonucleoside in mRNA + GTP + H(+) = a 5'-end (5'-triphosphoguanosine)-ribonucleoside in mRNA + diphosphate. Functionally, second step of mRNA capping. Transfer of the GMP moiety of GTP to the 5'-end of RNA via an enzyme-GMP covalent reaction intermediate. The chain is mRNA-capping enzyme subunit alpha (CEG1) from Candida glabrata (strain ATCC 2001 / BCRC 20586 / JCM 3761 / NBRC 0622 / NRRL Y-65 / CBS 138) (Yeast).